Reading from the N-terminus, the 211-residue chain is tRNA (guanine-N(7)-)-methyltransferase (211 aa).

Positions 44, 69, 96, and 118 each coordinate S-adenosyl-L-methionine. Asp-118 is a catalytic residue. Lys-122 is a binding site for substrate. The interval 124-129 (RHEKRR) is interaction with RNA. Substrate is bound by residues Asp-154 and 191–194 (TEYE).

This sequence belongs to the class I-like SAM-binding methyltransferase superfamily. TrmB family.

It catalyses the reaction guanosine(46) in tRNA + S-adenosyl-L-methionine = N(7)-methylguanosine(46) in tRNA + S-adenosyl-L-homocysteine. It functions in the pathway tRNA modification; N(7)-methylguanine-tRNA biosynthesis. Its function is as follows. Catalyzes the formation of N(7)-methylguanine at position 46 (m7G46) in tRNA. This is tRNA (guanine-N(7)-)-methyltransferase from Streptococcus pneumoniae (strain Taiwan19F-14).